Consider the following 551-residue polypeptide: MDIKKLSSLAHCAKTRSIVSLFDQKERANDFSLSTSHLYLDYSKQNITDVELEQLIEIAEDVGLSESITGQFNGDKINNTEGRSVLHTILRAPQVIKQQILGDTLANEVEAAELQMAKVVNDVQKGILTSHTGQRFTDVLAIGIGGSYYGVKVSLSALEHYRDLALSVHVIANVDGGALEEKLKTLNFETTLVVVISKTFTTQETMLNAKAVKQWMLSCASVKDLELNNVPLIIEKQWFAVSSNIEAAKEFGINIKHILPMWDWVGGRFSIWSTVGLPLALAIGNDNFNKLKQGAYEMDVHFKSTDFKNNMPVIMALLGIWNRNALEYPTLAILPYAHSLRALPGYLQQTDMESNGKSVSKSGDKLSWLTAPVVFGQEGTNGQHAFMQLMHQSDDIIPTDFIVALKGRSQYTENHKVLVANCFAQSEALMQGKTLTQVESELEMSALSTAEISLIAPHKTMKGNTPSNTLVMDLLTPETIGSLLALYEHKIFVQGVLWQVNSFDQWGVELGKQLGTRILSAIDGAEDDLLSASSQSLIARFRARSNVTPSV.

Glu-353 (proton donor) is an active-site residue. Residues His-384 and Lys-512 contribute to the active site.

This sequence belongs to the GPI family.

The protein resides in the cytoplasm. The enzyme catalyses alpha-D-glucose 6-phosphate = beta-D-fructose 6-phosphate. It participates in carbohydrate biosynthesis; gluconeogenesis. The protein operates within carbohydrate degradation; glycolysis; D-glyceraldehyde 3-phosphate and glycerone phosphate from D-glucose: step 2/4. Its function is as follows. Catalyzes the reversible isomerization of glucose-6-phosphate to fructose-6-phosphate. The polypeptide is Glucose-6-phosphate isomerase 2 (Colwellia psychrerythraea (strain 34H / ATCC BAA-681) (Vibrio psychroerythus)).